The chain runs to 206 residues: Purine nucleoside phosphorylase aq_167 (206 aa).

Residues His42, Cys78, and His93 each contribute to the Zn(2+) site.

Belongs to the purine nucleoside phosphorylase YfiH/LACC1 family. In terms of assembly, homodimer. Cu(2+) serves as cofactor. It depends on Zn(2+) as a cofactor.

It catalyses the reaction adenosine + phosphate = alpha-D-ribose 1-phosphate + adenine. The enzyme catalyses S-methyl-5'-thioadenosine + phosphate = 5-(methylsulfanyl)-alpha-D-ribose 1-phosphate + adenine. The catalysed reaction is inosine + phosphate = alpha-D-ribose 1-phosphate + hypoxanthine. It carries out the reaction adenosine + H2O + H(+) = inosine + NH4(+). In terms of biological role, purine nucleoside enzyme that catalyzes the phosphorolysis of adenosine and inosine nucleosides, yielding D-ribose 1-phosphate and the respective free bases, adenine and hypoxanthine. Also catalyzes the phosphorolysis of S-methyl-5'-thioadenosine into adenine and S-methyl-5-thio-alpha-D-ribose 1-phosphate. Also has adenosine deaminase activity. This chain is Purine nucleoside phosphorylase aq_167, found in Aquifex aeolicus (strain VF5).